We begin with the raw amino-acid sequence, 400 residues long: Acetate kinase (400 aa).

Asparagine 10 is a Mg(2+) binding site. Lysine 17 provides a ligand contact to ATP. Arginine 91 serves as a coordination point for substrate. Catalysis depends on aspartate 150, which acts as the Proton donor/acceptor. ATP-binding positions include 210 to 214 (HLGNG), 285 to 287 (DCR), and 333 to 337 (GIGEN). Mg(2+) is bound at residue glutamate 387.

Belongs to the acetokinase family. Homodimer. Requires Mg(2+) as cofactor. The cofactor is Mn(2+).

The protein resides in the cytoplasm. The catalysed reaction is acetate + ATP = acetyl phosphate + ADP. It participates in metabolic intermediate biosynthesis; acetyl-CoA biosynthesis; acetyl-CoA from acetate: step 1/2. Its function is as follows. Catalyzes the formation of acetyl phosphate from acetate and ATP. Can also catalyze the reverse reaction. The polypeptide is Acetate kinase (Pectobacterium carotovorum subsp. carotovorum (strain PC1)).